Here is a 675-residue protein sequence, read N- to C-terminus: Potassium-transporting ATPase ATP-binding subunit (675 aa).

Transmembrane regions (helical) follow at residues 38–58, 67–87, 216–236, and 253–273; these read VMFVVYLGTALTAYLTVANLV, LAITLLLLLTVLFANFAEGMA, IALSILLSGLTLIFLLAVVTL, and IALLVCLIPTTIGGLLPAIGI. The active-site 4-aspartylphosphate intermediate is Asp304. ATP contacts are provided by residues Asp341, Glu345, 371 to 378, and Lys389; that span reads FTAQTRMS. Positions 512 and 516 each coordinate Mg(2+). The next 3 helical transmembrane spans lie at 582–602, 610–630, and 654–674; these read FAILPALFVTAYPQLGVLNVM, AVLSAVIFNALIIPVLIPLAL, and GGILVPFIAIKLIDLLIGGLM.

Belongs to the cation transport ATPase (P-type) (TC 3.A.3) family. Type IA subfamily. As to quaternary structure, the system is composed of three essential subunits: KdpA, KdpB and KdpC.

It is found in the cell membrane. The enzyme catalyses K(+)(out) + ATP + H2O = K(+)(in) + ADP + phosphate + H(+). Its function is as follows. Part of the high-affinity ATP-driven potassium transport (or Kdp) system, which catalyzes the hydrolysis of ATP coupled with the electrogenic transport of potassium into the cytoplasm. This subunit is responsible for energy coupling to the transport system and for the release of the potassium ions to the cytoplasm. The polypeptide is Potassium-transporting ATPase ATP-binding subunit (Deinococcus radiodurans (strain ATCC 13939 / DSM 20539 / JCM 16871 / CCUG 27074 / LMG 4051 / NBRC 15346 / NCIMB 9279 / VKM B-1422 / R1)).